The following is a 573-amino-acid chain: Developmental and secondary metabolism regulator VEL1 (573 aa).

The region spanning 26 to 220 (NRHLWYQLTV…ADQGCRVRIR (195 aa)) is the Velvet domain. Positions 40-45 (ERARAC) match the Nuclear localization signal motif. Positions 222–520 (DVRMRKRDGK…STGGKRKHDH (299 aa)) are disordered. Basic and acidic residues predominate over residues 230–245 (GKGSGFDRRGEEEYSR). 2 stretches are compositionally biased toward pro residues: residues 291 to 310 (APPP…PPAA) and 341 to 351 (APIPPATPTGP). Low complexity predominate over residues 352–363 (YPTSSAAPSPYA). A compositionally biased stretch (pro residues) spans 379–389 (PPAPSASPAPP). The segment covering 432-448 (TPASQPTYSTPASQPTY) has biased composition (polar residues). Pro residues predominate over residues 458 to 475 (SAPPPAPYSAPAPPPPRP). Residues 476–504 (SMSQSSLAPLKIASLVSPLPPIEAQTEPL) are PEST.

The protein belongs to the velvet family. VeA subfamily. As to quaternary structure, component of the heterotrimeric velvet complex composed of LAE1, VEL1 and VEL2; VEL1 acting as a bridging protein between LAE1 and VEL2. Interacts with LAE1.

It localises to the nucleus. It is found in the cytoplasm. Component of the velvet transcription factor complex that controls sexual/asexual developmental ratio in response to light, promoting sexual development in the darkness while stimulating asexual sporulation under illumination. The velvet complex hat acts as a global regulator for secondary metabolite gene expression. Regulates expression of the carbohydrate-active enzyme gene clusters. The chain is Developmental and secondary metabolism regulator VEL1 from Hypocrea jecorina (strain QM6a) (Trichoderma reesei).